Consider the following 241-residue polypeptide: MRLRVDLLPHGNYPDVVLVVDVLRATTTAVTYLERGADALLLTATPEVALGLRGAAGEGGVLLGGERGGLPIPGFDFGNSPVEAAAQNFTGRVVVMNTTNGTGAAHIAAQTGKHVLLAALTNAHAAARRARALASEEIAIVCAGTDARVGLEDVYAAGVLAEYLLALGEFRIDDGARIALTIRRNAGDPLEALSSSGHGQHLVGLGLGDDVRYAAQVSTSTVVPVLDATQTTPEVLRFVGG.

This sequence belongs to the ComB family. It depends on Mg(2+) as a cofactor.

It carries out the reaction (2R)-O-phospho-3-sulfolactate + H2O = (2R)-3-sulfolactate + phosphate. The protein is Probable 2-phosphosulfolactate phosphatase of Deinococcus geothermalis (strain DSM 11300 / CIP 105573 / AG-3a).